Reading from the N-terminus, the 459-residue chain is Vitamin K-dependent protein C (459 aa).

The signal sequence occupies residues 1-18; sequence MWQLASLLLLLIIWAVSS. Positions 19-41 are excised as a propeptide; sequence TPVPPDSVFSSSQRAHQMLRSKR. Residues 42 to 87 form the Gla domain; the sequence is ANSFLEELRPSSLERECKEETCDFEEAREIFQNTENTMAFWSKYHD. A 4-carboxyglutamate mark is found at E47, E48, E55, E57, E60, E61, E66, E67, E70, and E76. The cysteines at positions 58 and 63 are disulfide-linked. 4 cysteine pairs are disulfide-bonded: C91–C110, C100–C105, C104–C119, and C121–C130. EGF-like domains follow at residues 96-131 and 135-175; these read PEHL…RFCL and RFSN…LQCE. At D112 the chain carries (3R)-3-hydroxyaspartate. N-linked (GlcNAc...) asparagine glycosylation occurs at N138. 5 cysteine pairs are disulfide-bonded: C139-C150, C146-C159, C161-C174, C182-C321, and C240-C256. The Peptidase S1 domain maps to 214-448; the sequence is LVNGKQSPWG…YLDWIHGHIR (235 aa). The Charge relay system role is filled by H255. N-linked (GlcNAc...) asparagine glycosylation occurs at N292. D301 functions as the Charge relay system in the catalytic mechanism. N353 carries N-linked (GlcNAc...) asparagine glycosylation. Intrachain disulfides connect C371/C385 and C396/C424. S400 serves as the catalytic Charge relay system.

This sequence belongs to the peptidase S1 family. In terms of assembly, synthesized as a single chain precursor, which is cleaved into a light chain and a heavy chain held together by a disulfide bond. The enzyme is then activated by thrombin, which cleaves a tetradecapeptide from the amino end of the heavy chain; this reaction, which occurs at the surface of endothelial cells, is strongly promoted by thrombomodulin. The vitamin K-dependent, enzymatic carboxylation of some Glu residues allows the modified protein to bind calcium. Post-translationally, the iron and 2-oxoglutarate dependent 3-hydroxylation of aspartate and asparagine is (R) stereospecific within EGF domains. Plasma; synthesized in the liver.

The protein localises to the secreted. It localises to the golgi apparatus. Its subcellular location is the endoplasmic reticulum. The catalysed reaction is Degradation of blood coagulation factors Va and VIIIa.. Protein C is a vitamin K-dependent serine protease that regulates blood coagulation by inactivating factors Va and VIIIa in the presence of calcium ions and phospholipids. Exerts a protective effect on the endothelial cell barrier function. This chain is Vitamin K-dependent protein C (PROC), found in Sus scrofa (Pig).